The chain runs to 294 residues: 33 kDa chaperonin (294 aa).

Intrachain disulfides connect Cys-238/Cys-240 and Cys-271/Cys-274.

The protein belongs to the HSP33 family. Post-translationally, under oxidizing conditions two disulfide bonds are formed involving the reactive cysteines. Under reducing conditions zinc is bound to the reactive cysteines and the protein is inactive.

The protein localises to the cytoplasm. Functionally, redox regulated molecular chaperone. Protects both thermally unfolding and oxidatively damaged proteins from irreversible aggregation. Plays an important role in the bacterial defense system toward oxidative stress. This Thermoanaerobacter pseudethanolicus (strain ATCC 33223 / 39E) (Clostridium thermohydrosulfuricum) protein is 33 kDa chaperonin.